The chain runs to 214 residues: Putative glucose-6-phosphate isomerase 1 (214 aa).

His92, His94, Glu101, and His140 together coordinate Fe cation.

This sequence belongs to the archaeal-type GPI family. Homodimer. The cofactor is Fe cation.

The protein resides in the cytoplasm. It catalyses the reaction alpha-D-glucose 6-phosphate = beta-D-fructose 6-phosphate. It functions in the pathway carbohydrate degradation; glycolysis; D-glyceraldehyde 3-phosphate and glycerone phosphate from D-glucose: step 2/4. The chain is Putative glucose-6-phosphate isomerase 1 (pgiA1) from Rhizobium meliloti (strain 1021) (Ensifer meliloti).